The primary structure comprises 561 residues: Urocanate hydratase (561 aa).

NAD(+) contacts are provided by residues 52-53, Q130, 176-178, E196, R201, 242-243, 263-267, 273-274, and Y322; these read GG, GMG, NA, QTSAH, and YL. C410 is a catalytic residue. NAD(+) is bound at residue G492.

It belongs to the urocanase family. Requires NAD(+) as cofactor.

It localises to the cytoplasm. It carries out the reaction 4-imidazolone-5-propanoate = trans-urocanate + H2O. It functions in the pathway amino-acid degradation; L-histidine degradation into L-glutamate; N-formimidoyl-L-glutamate from L-histidine: step 2/3. Catalyzes the conversion of urocanate to 4-imidazolone-5-propionate. The protein is Urocanate hydratase of Salmonella arizonae (strain ATCC BAA-731 / CDC346-86 / RSK2980).